Here is a 514-residue protein sequence, read N- to C-terminus: L-Threonine dehydratase biosynthetic IlvA (514 aa).

Lys62 carries the post-translational modification N6-(pyridoxal phosphate)lysine. Pyridoxal 5'-phosphate is bound by residues Asn89, 188–192 (GGGGL), and Ser315. 2 ACT-like domains span residues 339-411 (ALLA…DLSD) and 434-504 (RLYS…DESN).

It belongs to the serine/threonine dehydratase family. Homotetramer. Pyridoxal 5'-phosphate is required as a cofactor.

The enzyme catalyses L-threonine = 2-oxobutanoate + NH4(+). The protein operates within amino-acid biosynthesis; L-isoleucine biosynthesis; 2-oxobutanoate from L-threonine: step 1/1. Isoleucine allosterically inhibits whereas valine allosterically activates this enzyme. Functionally, catalyzes the anaerobic formation of alpha-ketobutyrate and ammonia from threonine in a two-step reaction. The first step involved a dehydration of threonine and a production of enamine intermediates (aminocrotonate), which tautomerizes to its imine form (iminobutyrate). Both intermediates are unstable and short-lived. The second step is the nonenzymatic hydrolysis of the enamine/imine intermediates to form 2-ketobutyrate and free ammonia. In the low water environment of the cell, the second step is accelerated by RidA. In Salmonella typhimurium (strain LT2 / SGSC1412 / ATCC 700720), this protein is L-Threonine dehydratase biosynthetic IlvA (ilvA).